The chain runs to 477 residues: Histidine--tRNA ligase (477 aa).

This sequence belongs to the class-II aminoacyl-tRNA synthetase family. As to quaternary structure, homodimer.

It is found in the cytoplasm. It carries out the reaction tRNA(His) + L-histidine + ATP = L-histidyl-tRNA(His) + AMP + diphosphate + H(+). This Xanthomonas campestris pv. campestris (strain 8004) protein is Histidine--tRNA ligase.